Consider the following 562-residue polypeptide: Terpene synthase 2 (562 aa).

Residues Asp-315, Asp-319, Asp-459, and Glu-467 each coordinate Mg(2+). Positions 315-319 (DDEYD) match the DDXXD motif motif.

The protein belongs to the terpene synthase family. Tpsa subfamily. Mg(2+) serves as cofactor. Requires Mn(2+) as cofactor. In terms of tissue distribution, expressed at low levels in stems, leaves, roots and fruits.

It carries out the reaction (2E,6E)-farnesyl diphosphate = delta-cadinene + diphosphate. The catalysed reaction is (2E,6E)-farnesyl diphosphate = alpha-cadinene + diphosphate. It catalyses the reaction (2E,6E)-farnesyl diphosphate + H2O = (-)-delta-cadinol + diphosphate. It functions in the pathway secondary metabolite biosynthesis; terpenoid biosynthesis. Its function is as follows. Sesquiterpene synthase involved in the biosynthesis of volatile compounds that contribute to the characteristic flavors of black pepper. Mediates the conversion of (2E,6E)-farnesyl diphosphate (FPP) into alpha-cadinene, delta-cadinene and delta-cadinol. The protein is Terpene synthase 2 of Piper nigrum (Black pepper).